We begin with the raw amino-acid sequence, 367 residues long: tRNA-specific 2-thiouridylase MnmA (367 aa).

Residues leucine 9–serine 16 and phenylalanine 35 contribute to the ATP site. Cysteine 107 functions as the Nucleophile in the catalytic mechanism. A disulfide bond links cysteine 107 and cysteine 205. Residue glycine 131 coordinates ATP. Residues lysine 155–glutamine 157 form an interaction with tRNA region. Cysteine 205 functions as the Cysteine persulfide intermediate in the catalytic mechanism.

Belongs to the MnmA/TRMU family.

The protein localises to the cytoplasm. It catalyses the reaction S-sulfanyl-L-cysteinyl-[protein] + uridine(34) in tRNA + AH2 + ATP = 2-thiouridine(34) in tRNA + L-cysteinyl-[protein] + A + AMP + diphosphate + H(+). In terms of biological role, catalyzes the 2-thiolation of uridine at the wobble position (U34) of tRNA, leading to the formation of s(2)U34. In Petrotoga mobilis (strain DSM 10674 / SJ95), this protein is tRNA-specific 2-thiouridylase MnmA.